A 524-amino-acid chain; its full sequence is Bifunctional purine biosynthesis protein PurH (524 aa).

The region spanning Met-1–Val-145 is the MGS-like domain.

Belongs to the PurH family.

It carries out the reaction (6R)-10-formyltetrahydrofolate + 5-amino-1-(5-phospho-beta-D-ribosyl)imidazole-4-carboxamide = 5-formamido-1-(5-phospho-D-ribosyl)imidazole-4-carboxamide + (6S)-5,6,7,8-tetrahydrofolate. The enzyme catalyses IMP + H2O = 5-formamido-1-(5-phospho-D-ribosyl)imidazole-4-carboxamide. It participates in purine metabolism; IMP biosynthesis via de novo pathway; 5-formamido-1-(5-phospho-D-ribosyl)imidazole-4-carboxamide from 5-amino-1-(5-phospho-D-ribosyl)imidazole-4-carboxamide (10-formyl THF route): step 1/1. The protein operates within purine metabolism; IMP biosynthesis via de novo pathway; IMP from 5-formamido-1-(5-phospho-D-ribosyl)imidazole-4-carboxamide: step 1/1. The chain is Bifunctional purine biosynthesis protein PurH from Ralstonia nicotianae (strain ATCC BAA-1114 / GMI1000) (Ralstonia solanacearum).